The primary structure comprises 330 residues: Phosphate acyltransferase (330 aa).

The protein belongs to the PlsX family. As to quaternary structure, homodimer. Probably interacts with PlsY.

Its subcellular location is the cytoplasm. It catalyses the reaction a fatty acyl-[ACP] + phosphate = an acyl phosphate + holo-[ACP]. It participates in lipid metabolism; phospholipid metabolism. In terms of biological role, catalyzes the reversible formation of acyl-phosphate (acyl-PO(4)) from acyl-[acyl-carrier-protein] (acyl-ACP). This enzyme utilizes acyl-ACP as fatty acyl donor, but not acyl-CoA. The sequence is that of Phosphate acyltransferase from Streptococcus pneumoniae (strain 70585).